Reading from the N-terminus, the 241-residue chain is DNA repair protein RecO (241 aa).

It belongs to the RecO family.

Its function is as follows. Involved in DNA repair and RecF pathway recombination. This Vibrio cholerae serotype O1 (strain ATCC 39541 / Classical Ogawa 395 / O395) protein is DNA repair protein RecO.